Here is a 1011-residue protein sequence, read N- to C-terminus: Poly [ADP-ribose] polymerase 1 (1011 aa).

2 consecutive PARP-type zinc fingers follow at residues 9 to 91 and 113 to 203; these read YRAE…ETGA and FAAE…PATK. Zn(2+) is bound by residues cysteine 21, cysteine 24, histidine 53, cysteine 56, cysteine 125, cysteine 128, histidine 159, and cysteine 162. The interval 198-235 is disordered; sequence QLPATKTEGKRKGEEVDGNVVAKKKSRKEKEKESKQEK. Short sequence motifs (nuclear localization signal) lie at residues 207-209 and 220-225; these read KRK and KKKSRK. In terms of domain architecture, PADR1 zinc-binding spans 224-358; sequence RKEKEKESKQ…CKKQDRIFPP (135 aa). Basic and acidic residues predominate over residues 225-235; sequence KEKEKESKQEK. The interval 289 to 331 is zinc ribbon; the sequence is GALLPCEECKGQFVFKSDAYYCSGDITAWTKCVAKTQTPNRKD. The Zn(2+) site is built by cysteine 294, cysteine 297, cysteine 310, and cysteine 320. The interval 359–378 is disordered; the sequence is EAATVNSAPPPPASAPLTET. The tract at residues 371 to 522 is automodification domain; the sequence is ASAPLTETVT…PSKSEKKMKL (152 aa). The region spanning 382 to 473 is the BRCT domain; sequence PQDKPLTNMK…KGFQELLSLH (92 aa). PolyADP-ribosyl glutamic acid occurs at positions 403, 404, 410, 411, 432, 434, 441, 442, 453, 454, 468, 481, 485, 488, 509, 510, and 517. Residues 496–519 form a disordered region; sequence SKPANMKSAGKVKEEQGPSKSEKK. Residues 506-519 are compositionally biased toward basic and acidic residues; sequence KVKEEQGPSKSEKK. A WGR domain is found at 539-635; the sequence is SAHVFEKGGK…KNFTKYPKKF (97 aa). The PARP alpha-helical domain occupies 659 to 776; sequence KSKLAKPIQD…DIEVAYSLLR (118 aa). The 227-residue stretch at 785-1011 folds into the PARP catalytic domain; that stretch reads DPIDINYEKL…LKFNYKTSLW (227 aa). Residues 859 to 861, glycine 868, arginine 875, and serine 901 contribute to the NAD(+) site; that span reads HGS. Catalysis depends on glutamate 985, which acts as the For poly [ADP-ribose] polymerase activity.

It belongs to the ARTD/PARP family. In terms of assembly, homodimer; PARP-type zinc-fingers from separate parp1 molecules form a dimer module that specifically recognizes DNA strand breaks. In terms of processing, poly-ADP-ribosylated on serine, glutamate and aspartate residues by autocatalysis. Auto-ADP-ribosylation on serine takes place following interaction with HPF1. Auto poly-ADP-ribosylation on serine residues promotes its dissociation from chromatin.

The protein resides in the chromosome. The protein localises to the nucleus. It localises to the nucleolus. It is found in the cytoplasm. Its subcellular location is the cytosol. The enzyme catalyses NAD(+) + (ADP-D-ribosyl)n-acceptor = nicotinamide + (ADP-D-ribosyl)n+1-acceptor + H(+).. The catalysed reaction is L-seryl-[protein] + NAD(+) = O-(ADP-D-ribosyl)-L-seryl-[protein] + nicotinamide + H(+). It catalyses the reaction L-aspartyl-[protein] + NAD(+) = 4-O-(ADP-D-ribosyl)-L-aspartyl-[protein] + nicotinamide. It carries out the reaction L-glutamyl-[protein] + NAD(+) = 5-O-(ADP-D-ribosyl)-L-glutamyl-[protein] + nicotinamide. The enzyme catalyses L-tyrosyl-[protein] + NAD(+) = O-(ADP-D-ribosyl)-L-tyrosyl-[protein] + nicotinamide + H(+). The catalysed reaction is L-histidyl-[protein] + NAD(+) = N(tele)-(ADP-D-ribosyl)-L-histidyl-[protein] + nicotinamide + H(+). With respect to regulation, ADP-ribosyltransferase activity is regulated via an allosteric activation mechanism. In absence of activation signal, parp1 is autoinhibited by the PARP alpha-helical domain (also named HD region), which prevents effective NAD(+)-binding. Activity is highly stimulated by signals, such as DNA strand breaks. Binding to damaged DNA unfolds the PARP alpha-helical domain, relieving autoinhibition. Poly-ADP-ribosyltransferase activity is tightly regulated and parp1 is removed from damaged chromatin following initial poly-ADP-ribosylation of chromatin to avoid prolonged residence (trapping) that has cytotoxic consequences. A number of factors or post-translational modifications (auto-poly-ADP-ribosylation) promote parp1 removal from chromatin. In terms of biological role, poly-ADP-ribosyltransferase that mediates poly-ADP-ribosylation of proteins and plays a key role in DNA repair. Mediates glutamate, aspartate, serine, histidine or tyrosine ADP-ribosylation of proteins: the ADP-D-ribosyl group of NAD(+) is transferred to the acceptor carboxyl group of target residues and further ADP-ribosyl groups are transferred to the 2'-position of the terminal adenosine moiety, building up a polymer with an average chain length of 20-30 units. Serine ADP-ribosylation of proteins constitutes the primary form of ADP-ribosylation of proteins in response to DNA damage. Specificity for the different amino acids is conferred by interacting factors, such as hpf1 and nmnat1. Following interaction with hpf1, catalyzes serine ADP-ribosylation of target proteins; hpf1 confers serine specificity by completing the parp1 active site. Also catalyzes tyrosine ADP-ribosylation of target proteins following interaction with hpf1. Following interaction with nmnat1, catalyzes glutamate and aspartate ADP-ribosylation of target proteins; nmnat1 confers glutamate and aspartate specificity. Parp1 initiates the repair of DNA breaks: recognizes and binds DNA breaks within chromatin and recruits hpf1, licensing serine ADP-ribosylation of target proteins, such as histones (H2BS6ADPr and H3S10ADPr), thereby promoting decompaction of chromatin and the recruitment of repair factors leading to the reparation of DNA strand breaks. In addition to base excision repair (BER) pathway, also involved in double-strand breaks (DSBs) repair. Mediates the poly-ADP-ribosylation of a number of proteins. In addition to proteins, also able to ADP-ribosylate DNA: catalyzes ADP-ribosylation of DNA strand break termini containing terminal phosphates and a 2'-OH group in single- and double-stranded DNA, respectively. Parp1-mediated DNA repair in neurons plays a role in sleep: senses DNA damage in neurons and promotes sleep, facilitating efficient DNA repair. In addition to DNA repair, also involved in other processes, such as transcription regulation, programmed cell death, membrane repair, adipogenesis and innate immunity. Acts as a repressor of transcription: binds to nucleosomes and modulates chromatin structure in a manner similar to histone H1, thereby altering RNA polymerase II. Acts both as a positive and negative regulator of transcription elongation, depending on the context. Poly-ADP-ribose chains generated by parp1 also play a role in poly-ADP-ribose-dependent cell death, a process named parthanatos. Also acts as a negative regulator of the cGAS-STING pathway by mediating poly-ADP-ribosylation and inactivation of cgas. Acts as a negative regulator of adipogenesis by catalyzing poly ADP-ribosylation of histone H2B on 'Glu-35' (H2BE35ADPr). The sequence is that of Poly [ADP-ribose] polymerase 1 (PARP1) from Gallus gallus (Chicken).